The primary structure comprises 481 residues: Aspartyl/glutamyl-tRNA(Asn/Gln) amidotransferase subunit B (481 aa).

The protein belongs to the GatB/GatE family. GatB subfamily. In terms of assembly, heterotrimer of A, B and C subunits.

It carries out the reaction L-glutamyl-tRNA(Gln) + L-glutamine + ATP + H2O = L-glutaminyl-tRNA(Gln) + L-glutamate + ADP + phosphate + H(+). The enzyme catalyses L-aspartyl-tRNA(Asn) + L-glutamine + ATP + H2O = L-asparaginyl-tRNA(Asn) + L-glutamate + ADP + phosphate + 2 H(+). Allows the formation of correctly charged Asn-tRNA(Asn) or Gln-tRNA(Gln) through the transamidation of misacylated Asp-tRNA(Asn) or Glu-tRNA(Gln) in organisms which lack either or both of asparaginyl-tRNA or glutaminyl-tRNA synthetases. The reaction takes place in the presence of glutamine and ATP through an activated phospho-Asp-tRNA(Asn) or phospho-Glu-tRNA(Gln). The protein is Aspartyl/glutamyl-tRNA(Asn/Gln) amidotransferase subunit B of Cellvibrio japonicus (strain Ueda107) (Pseudomonas fluorescens subsp. cellulosa).